The primary structure comprises 379 residues: Chaperone protein DnaJ (379 aa).

A J domain is found at 5 to 70 (DYYEILGVSK…QKRAAYDQYG (66 aa)). Residues 134–212 (GVTKEIRIPT…CHGHGRVEKS (79 aa)) form a CR-type zinc finger. Zn(2+) is bound by residues Cys-147, Cys-150, Cys-164, Cys-167, Cys-186, Cys-189, Cys-200, and Cys-203. CXXCXGXG motif repeat units follow at residues 147-154 (CDVCHGSG), 164-171 (CPTCHGSG), 186-193 (CPHCQGRG), and 200-207 (CHKCHGHG).

This sequence belongs to the DnaJ family. Homodimer. It depends on Zn(2+) as a cofactor.

It is found in the cytoplasm. Functionally, participates actively in the response to hyperosmotic and heat shock by preventing the aggregation of stress-denatured proteins and by disaggregating proteins, also in an autonomous, DnaK-independent fashion. Unfolded proteins bind initially to DnaJ; upon interaction with the DnaJ-bound protein, DnaK hydrolyzes its bound ATP, resulting in the formation of a stable complex. GrpE releases ADP from DnaK; ATP binding to DnaK triggers the release of the substrate protein, thus completing the reaction cycle. Several rounds of ATP-dependent interactions between DnaJ, DnaK and GrpE are required for fully efficient folding. Also involved, together with DnaK and GrpE, in the DNA replication of plasmids through activation of initiation proteins. In Salmonella agona (strain SL483), this protein is Chaperone protein DnaJ.